The primary structure comprises 347 residues: NADH-ubiquinone oxidoreductase chain 2 (347 aa).

The next 11 membrane-spanning stretches (helical) occupy residues 1–21 (MNPL…SIIL), 25–45 (HWFM…PVLM), 59–79 (YFLT…INLM), 96–116 (LLIT…FWVP), 122–142 (VSLQ…LAVM), 145–165 (IFAS…IMIG), 178–198 (IMAY…IYNP), 200–220 (LMLL…MMFM), 242–262 (VLMM…GFMP), 274–294 (NSVI…FFYM), and 325–345 (LLAP…MFIL).

The protein belongs to the complex I subunit 2 family. As to quaternary structure, core subunit of respiratory chain NADH dehydrogenase (Complex I) which is composed of 45 different subunits. Interacts with TMEM242.

It localises to the mitochondrion inner membrane. It carries out the reaction a ubiquinone + NADH + 5 H(+)(in) = a ubiquinol + NAD(+) + 4 H(+)(out). Core subunit of the mitochondrial membrane respiratory chain NADH dehydrogenase (Complex I) which catalyzes electron transfer from NADH through the respiratory chain, using ubiquinone as an electron acceptor. Essential for the catalytic activity and assembly of complex I. The sequence is that of NADH-ubiquinone oxidoreductase chain 2 from Myosorex kihaulei (Kihaule's mouse shrew).